Reading from the N-terminus, the 421-residue chain is MANFDILEDLKWRGAINQETDEEGLRDYLAKHDDLALYCGTDPTGDSLHIGHLIPFMILKRFQLAGYKPVIVIGGGTGSIGDPSGRSTERVLQSEETIKHNEEALTAQMVKLFGTENFRIVNNRDWLGKMNLLEFLRDYGKLFQVNNMLNKEVVASRLKNGISFTEFSYQILQAIDFYILNRDHGVQMQIGGADQWGNITAGIDLIHRLEGADRPAFGLTIPLMLKADGTKFGKSAGGAVWLDPEKTSPYEFYQFWINQDDRDVIKYLKYFTFLKHEEIDALEEKVKTEPWKREAQKRLAEEVTKFVHGEEGLKEAQTVTEALFSGNVKDLTTKQVEIALAKAPSAESGEEKKNLVDFLVDTKIESSKRQAREDVNNGAIYVNGDRIQDTDFEVDPAAAFDGKFVIIRKGKKKYTLVHIKG.

Tyr38 is an L-tyrosine binding site. The 'HIGH' region motif lies at 43 to 52; the sequence is PTGDSLHIGH. Residues Tyr169 and Gln173 each contribute to the L-tyrosine site. A 'KMSKS' region motif is present at residues 231 to 235; it reads KFGKS. Lys234 is a binding site for ATP. The S4 RNA-binding domain maps to 353-419; it reads KNLVDFLVDT…GKKKYTLVHI (67 aa).

It belongs to the class-I aminoacyl-tRNA synthetase family. TyrS type 1 subfamily. Homodimer.

It is found in the cytoplasm. The enzyme catalyses tRNA(Tyr) + L-tyrosine + ATP = L-tyrosyl-tRNA(Tyr) + AMP + diphosphate + H(+). Functionally, catalyzes the attachment of tyrosine to tRNA(Tyr) in a two-step reaction: tyrosine is first activated by ATP to form Tyr-AMP and then transferred to the acceptor end of tRNA(Tyr). The polypeptide is Tyrosine--tRNA ligase (Lactobacillus delbrueckii subsp. bulgaricus (strain ATCC BAA-365 / Lb-18)).